Reading from the N-terminus, the 531-residue chain is Tryptophan biosynthesis protein TRP1 (531 aa).

The interval 1-254 (MGNILEEIAA…TVKDLLQNVT (254 aa)) is indole-3-glycerol phosphate synthase. The tract at residues 255–531 (RHSESGEFAL…TLKIDEETEN (277 aa)) is N-(5'-phosphoribosyl)anthranilate isomerase.

In the N-terminal section; belongs to the TrpC family. This sequence in the C-terminal section; belongs to the TrpF family.

The catalysed reaction is N-(5-phospho-beta-D-ribosyl)anthranilate = 1-(2-carboxyphenylamino)-1-deoxy-D-ribulose 5-phosphate. The enzyme catalyses 1-(2-carboxyphenylamino)-1-deoxy-D-ribulose 5-phosphate + H(+) = (1S,2R)-1-C-(indol-3-yl)glycerol 3-phosphate + CO2 + H2O. It functions in the pathway amino-acid biosynthesis; L-tryptophan biosynthesis; L-tryptophan from chorismate: step 3/5. It participates in amino-acid biosynthesis; L-tryptophan biosynthesis; L-tryptophan from chorismate: step 4/5. In terms of biological role, bifunctional enzyme that catalyzes two sequential steps of tryptophan biosynthetic pathway. The polypeptide is Tryptophan biosynthesis protein TRP1 (TRP1) (Phytophthora nicotianae (Potato buckeye rot agent)).